A 144-amino-acid chain; its full sequence is Nucleoside diphosphate kinase (144 aa).

The ATP site is built by Lys-11, Phe-59, Arg-87, Thr-93, Arg-104, and Asn-114. His-117 serves as the catalytic Pros-phosphohistidine intermediate.

This sequence belongs to the NDK family. Homotetramer. The cofactor is Mg(2+).

The protein resides in the cytoplasm. The catalysed reaction is a 2'-deoxyribonucleoside 5'-diphosphate + ATP = a 2'-deoxyribonucleoside 5'-triphosphate + ADP. The enzyme catalyses a ribonucleoside 5'-diphosphate + ATP = a ribonucleoside 5'-triphosphate + ADP. In terms of biological role, major role in the synthesis of nucleoside triphosphates other than ATP. The ATP gamma phosphate is transferred to the NDP beta phosphate via a ping-pong mechanism, using a phosphorylated active-site intermediate. The polypeptide is Nucleoside diphosphate kinase (Aliivibrio salmonicida (strain LFI1238) (Vibrio salmonicida (strain LFI1238))).